Reading from the N-terminus, the 473-residue chain is Glucose facilitated diffusion protein (473 aa).

Topologically, residues 1–13 are cytoplasmic; the sequence is MSSESSQGLVTRL. A helical transmembrane segment spans residues 14 to 34; sequence ALIAAIGGLLFGYDSAVIAAI. At 35-59 the chain is on the periplasmic side; it reads GTPVDIHFIAPRHLSATAAASLSGM. A helical membrane pass occupies residues 60–80; sequence VVVAVLVGCVTGSLLSGWIGI. The Cytoplasmic segment spans residues 81-85; sequence RFGRR. The chain crosses the membrane as a helical span at residues 86–106; the sequence is GGLLMSSICFVAAGFGAALTE. At 107-112 the chain is on the periplasmic side; that stretch reads KLFGTG. The chain crosses the membrane as a helical span at residues 113-133; sequence GSALQIFCFFRFLAGLGIGVV. The Cytoplasmic segment spans residues 134 to 158; the sequence is STLTPTYIAEIAPPDKRGQMVSGQQ. The chain crosses the membrane as a helical span at residues 159–179; the sequence is MAIVTGALTGYIFTWLLAHFG. Residues 180-187 are Periplasmic-facing; that stretch reads SIDWVNAS. Residues 188–208 traverse the membrane as a helical segment; that stretch reads GWCWSPASEGLIGIAFLLLLL. Residues 209 to 257 lie on the Cytoplasmic side of the membrane; it reads TAPDTPHWLVMKGRHSEASKILARLEPQADPNLTIQKIKAGFDKAMDKS. Residues 258 to 278 form a helical membrane-spanning segment; that stretch reads SAGLFAFGITVVFAGVSVAAF. Topologically, residues 279 to 303 are periplasmic; the sequence is QQLVGINAVLYYAPQMFQNLGFGAD. A helical membrane pass occupies residues 304–324; that stretch reads TALLQTISIGVVNFIFTMIAS. Residues 325 to 335 lie on the Cytoplasmic side of the membrane; the sequence is RVVDRFGRKPL. Residues 336 to 356 traverse the membrane as a helical segment; the sequence is LIWGALGMAAMMAVLGCCFWF. At 357–366 the chain is on the periplasmic side; that stretch reads KVGGVLPLAS. A helical transmembrane segment spans residues 367-387; that stretch reads VLLYIAVFGMSWGPVCWVVLS. Over 388 to 396 the chain is Cytoplasmic; it reads EMFPSSIKG. A helical membrane pass occupies residues 397–417; sequence AAMPIAVTGQWLANILVNFLF. Over 418 to 429 the chain is Periplasmic; it reads KVADGSPALNQT. A helical membrane pass occupies residues 430-450; the sequence is FNHGFSYLVFAALSILGGLIV. Residues 451–473 lie on the Cytoplasmic side of the membrane; sequence ARFVPETKGRSLDEIEEMWRSQK.

Belongs to the major facilitator superfamily. Sugar transporter (TC 2.A.1.1) family.

It localises to the cell inner membrane. Functionally, allows uptake of glucose by the cell; allows growth on glucose minimal medium by E.coli cells impaired in glucose transport. Also transports fructose, but has a strong preference for glucose. The polypeptide is Glucose facilitated diffusion protein (Zymomonas mobilis subsp. mobilis (strain ATCC 31821 / ZM4 / CP4)).